A 294-amino-acid polypeptide reads, in one-letter code: 33 kDa chaperonin (294 aa).

2 disulfide bridges follow: Cys-238–Cys-240 and Cys-271–Cys-274.

It belongs to the HSP33 family. Post-translationally, under oxidizing conditions two disulfide bonds are formed involving the reactive cysteines. Under reducing conditions zinc is bound to the reactive cysteines and the protein is inactive.

It is found in the cytoplasm. In terms of biological role, redox regulated molecular chaperone. Protects both thermally unfolding and oxidatively damaged proteins from irreversible aggregation. Plays an important role in the bacterial defense system toward oxidative stress. This is 33 kDa chaperonin from Clostridium novyi (strain NT).